We begin with the raw amino-acid sequence, 602 residues long: Elongation factor 4 (602 aa).

The region spanning 7-189 (ARLRNFCIIA…SVVDRIPPPK (183 aa)) is the tr-type G domain. GTP-binding positions include 19-24 (DHGKST) and 136-139 (NKVD).

The protein belongs to the TRAFAC class translation factor GTPase superfamily. Classic translation factor GTPase family. LepA subfamily.

Its subcellular location is the cell inner membrane. It catalyses the reaction GTP + H2O = GDP + phosphate + H(+). Functionally, required for accurate and efficient protein synthesis under certain stress conditions. May act as a fidelity factor of the translation reaction, by catalyzing a one-codon backward translocation of tRNAs on improperly translocated ribosomes. Back-translocation proceeds from a post-translocation (POST) complex to a pre-translocation (PRE) complex, thus giving elongation factor G a second chance to translocate the tRNAs correctly. Binds to ribosomes in a GTP-dependent manner. The sequence is that of Elongation factor 4 from Prochlorococcus marinus (strain SARG / CCMP1375 / SS120).